We begin with the raw amino-acid sequence, 126 residues long: E3 ubiquitin-protein ligase PPP1R11 (126 aa).

Positions 1 to 25 (MAEAGAGLSETVTETTVTVTTEPEN) are disordered. Position 2 is an N-acetylalanine (Ala-2). The span at 10 to 22 (ETVTETTVTVTTE) shows a compositional bias: low complexity. The interval 52–62 (HMGRRSSKCCC) is atypical RING finger domain 1. A disordered region spans residues 70–126 (FGESSTESDEEEEEGCGHTHCVRGHRKGRRRATLGPTPTTPPQPPDPSQPPPGPMQH). Residues Ser-73 and Ser-74 each carry the phosphoserine modification. Thr-75 carries the post-translational modification Phosphothreonine. Ser-77 bears the Phosphoserine mark. Positions 85 to 94 (CGHTHCVRGH) are atypical RING finger domain 2. Over residues 89 to 101 (HCVRGHRKGRRRA) the composition is skewed to basic residues. Residues 107–126 (PTTPPQPPDPSQPPPGPMQH) show a composition bias toward pro residues. Phosphothreonine is present on Thr-109.

Interacts with TLR2 and UBE2D2. Post-translationally, auto-ubiquitinated. In terms of tissue distribution, widely expressed.

The enzyme catalyses S-ubiquitinyl-[E2 ubiquitin-conjugating enzyme]-L-cysteine + [acceptor protein]-L-lysine = [E2 ubiquitin-conjugating enzyme]-L-cysteine + N(6)-ubiquitinyl-[acceptor protein]-L-lysine.. It participates in protein modification; protein ubiquitination. Its function is as follows. Atypical E3 ubiquitin-protein ligase which ubiquitinates TLR2 at 'Lys-754' leading to its degradation by the proteasome. Plays a role in regulating inflammatory cytokine release and gram-positive bacterial clearance by functioning, in part, through the ubiquitination and degradation of TLR2. Inhibitor of protein phosphatase 1. The protein is E3 ubiquitin-protein ligase PPP1R11 (PPP1R11) of Homo sapiens (Human).